We begin with the raw amino-acid sequence, 303 residues long: MHIYILGSAAGGGFPQWNCNCPNCHGVRTGTINAKVRTQSSIAISENGVDWILLNASPDIRQQLFDFKAAQPARKLRDTGITNVILMDSQLDHTTGLLTLREGCPINVWCTEMVYQDLTTGFPVFNMLKHWNGGLQYHQIDPKQAFKIDGFENLEFLPLIIQSAAPPYSPHRHDPHEGDNIALIIKDHKTQKQLFYAPGLGKIDDQIMQIMQDSDCVMIDGTLWTDDEMQQTGVGKKTGREMGHLYISGEGGSLSYLNQLSTPKKVLIHINNTNPILNEDSAQFAELKANDVEVAFDGMQIEL.

This sequence belongs to the PqqB family.

It functions in the pathway cofactor biosynthesis; pyrroloquinoline quinone biosynthesis. In terms of biological role, may be involved in the transport of PQQ or its precursor to the periplasm. The sequence is that of Coenzyme PQQ synthesis protein B from Acinetobacter baumannii (strain AYE).